A 570-amino-acid chain; its full sequence is MSEKYPGPLVVEGKLSDAERMKLESNYLRGTIAEDLNDGLTGGFKGDNFLLIRFHGMYQQDDRDIRAERAAQKLEPRHAMLLRCRLPGGVITTTQWQAIDKFAADNTIYGSIRLTNRQTFQFHGILKKNVKPVHQMLHSVGLDALATANDMNRNVLCTSNPYESELHAEAYEWAKKISEHLLPRTRAYAEIWLDQEKVATTDEEPILGQTYLPRKFKTTVVIPPQNDIDLHANDMNFVAIAENGKLVGFNLLVGGGLSIEHGNKKTYARTASEFGYLPLEHTLAVAEAVVTTQRDWGNRTDRKNAKTKYTLERVGLETFKAEVERRAGITFEPIRPYEFTGRGDRIGWVKGIDDKWHLTLFIENGRILDYPGRPLKTGLLEIAKIHQGEFRITANQNLIIASVPESQKAKIEKLARDHGLMNAVSAQRENSMACVSFPTCPLAMAEAERFLPSFTDKVEAILEKHGIPDEHIVMRVTGCPNGCGRAMLAEIGLVGKAPGRYNLHLGGNRIGSRIPRMYQENITEPDIQASLDELIGRWAKEREAGEGFGDFTVRAGIIRPVLDPARDFWE.

Cysteine 434, cysteine 440, cysteine 479, and cysteine 483 together coordinate [4Fe-4S] cluster. Cysteine 483 contributes to the siroheme binding site.

The protein belongs to the nitrite and sulfite reductase 4Fe-4S domain family. Alpha(8)-beta(8). The alpha component is a flavoprotein, the beta component is a hemoprotein. Siroheme is required as a cofactor. It depends on [4Fe-4S] cluster as a cofactor.

It catalyses the reaction hydrogen sulfide + 3 NADP(+) + 3 H2O = sulfite + 3 NADPH + 4 H(+). Its pathway is sulfur metabolism; hydrogen sulfide biosynthesis; hydrogen sulfide from sulfite (NADPH route): step 1/1. Its function is as follows. Component of the sulfite reductase complex that catalyzes the 6-electron reduction of sulfite to sulfide. This is one of several activities required for the biosynthesis of L-cysteine from sulfate. This chain is Sulfite reductase [NADPH] hemoprotein beta-component, found in Salmonella typhi.